A 145-amino-acid chain; its full sequence is Large-conductance mechanosensitive channel (145 aa).

Helical transmembrane passes span 14–34 and 83–103; these read VIDL…VNSL and GAFL…FLLV.

This sequence belongs to the MscL family. In terms of assembly, homopentamer.

It is found in the cell inner membrane. Channel that opens in response to stretch forces in the membrane lipid bilayer. May participate in the regulation of osmotic pressure changes within the cell. This chain is Large-conductance mechanosensitive channel, found in Paracoccus denitrificans (strain Pd 1222).